Consider the following 109-residue polypeptide: MSATLKDYLNKRVVIIKVDGECLIASLNGFDKNTNLFITNVFNRISKEFICKAQLLRGSEIALVGLIDAENDDSLAPIDEKKVPMLKDTKNKIENEHVIWEKVYESKTK.

In terms of domain architecture, Sm spans 1-70 (MSATLKDYLN…IALVGLIDAE (70 aa)).

The protein belongs to the snRNP Sm proteins family. As to quaternary structure, component of the heptameric LSM2-LSM8 complex that forms a seven-membered ring structure with a donut shape; an RNA strand can pass through the hole in the center of the ring structure. The LSm subunits are arranged in the order LSM8, LSM2, LSM3, LSM6, LSM5, LSM7 and LSM4. Component of the spliceosome U4/U6-U5 tri-snRNP complex composed of the U4, U6 and U5 snRNAs and at least PRP3, PRP4, PRP6, PRP8, PRP18, PRP31, PRP38, SNU13, SNU23, SNU66, SNU114, SPP381, SMB1, SMD1, SMD2, SMD3, SMX2, SMX3, LSM2, LSM3, LSM4, LSM5, LSM6, LSM7, LSM8, BRR2 and DIB1.

Its subcellular location is the nucleus. The protein localises to the cytoplasm. Its function is as follows. Component of the nuclear LSM2-LSM8 complex, which is involved in spliceosome assembly. The LSM2-LSM8 complex plays a role in the biogenesis of the spliceosomal U4/U6-U5 tri-snRNP complex by accelerating PRP24-mediated annealing of U4/U6 di-snRNA. The LSM2-LSM8 complex binds U6 snRNA terminating with a non-cyclic 3' phosphate group. LSM2-LSM8 is probably also involved in degradation of nuclear pre-mRNA by targeting them for decapping. LSM2-LSM8 could be involved in processing of pre-tRNAs, pre-rRNAs and U3 snoRNA, although involvement may be indirect. This is LSM2-LSM8 complex subunit LSM8 (LSM8) from Saccharomyces cerevisiae (strain ATCC 204508 / S288c) (Baker's yeast).